We begin with the raw amino-acid sequence, 656 residues long: Threonine--tRNA ligase (656 aa).

Residues 1 to 63 (MAEIQLTFPD…LEDGAIEIIT (63 aa)) enclose the TGS domain. Residues 243 to 541 (DHRVIGNQLD…LTEIYKGAFP (299 aa)) are catalytic. Positions 337, 388, and 518 each coordinate Zn(2+).

It belongs to the class-II aminoacyl-tRNA synthetase family. As to quaternary structure, homodimer. Zn(2+) serves as cofactor.

Its subcellular location is the cytoplasm. It carries out the reaction tRNA(Thr) + L-threonine + ATP = L-threonyl-tRNA(Thr) + AMP + diphosphate + H(+). Catalyzes the attachment of threonine to tRNA(Thr) in a two-step reaction: L-threonine is first activated by ATP to form Thr-AMP and then transferred to the acceptor end of tRNA(Thr). Also edits incorrectly charged L-seryl-tRNA(Thr). The protein is Threonine--tRNA ligase of Latilactobacillus sakei subsp. sakei (strain 23K) (Lactobacillus sakei subsp. sakei).